Here is a 1225-residue protein sequence, read N- to C-terminus: Structural maintenance of chromosomes protein 1 (1225 aa).

Residue 33–40 (GPNGSGKS) participates in ATP binding. Positions 173-489 (SGSIQYKKEY…SANNQEYDLN (317 aa)) form a coiled coil. Positions 527–641 (PGVKGLVHDL…CNTLNIAKDL (115 aa)) constitute an SMC hinge domain. Residues 679 to 1063 (KEEYQSLMSL…LKIKKKRKEL (385 aa)) adopt a coiled-coil conformation. Positions 1057-1061 (KKKRK) match the Nuclear localization signal motif.

This sequence belongs to the SMC family. SMC1 subfamily. Cohesin complexes are composed of the SMC1 and SMC3 heterodimer attached via their SMC hinge domain, MCD1/SCC1 which link them, and IRR1/SCC3, which interacts with MCD1. The cohesin complex also interacts with SCC2, which is required for its association with chromosomes.

It localises to the nucleus. Its subcellular location is the chromosome. In terms of biological role, involved in chromosome cohesion during cell cycle and in DNA repair. Central component of cohesin complex. The cohesin complex is required for the cohesion of sister chromatids after DNA replication. The cohesin complex apparently forms a large proteinaceous ring within which sister chromatids can be trapped. At anaphase, the complex is cleaved and dissociates from chromatin, allowing sister chromatids to segregate. The protein is Structural maintenance of chromosomes protein 1 (SMC1) of Saccharomyces cerevisiae (strain ATCC 204508 / S288c) (Baker's yeast).